Consider the following 198-residue polypeptide: ATP synthase protein MI25 (198 aa).

Residues 29–49 form a helical membrane-spanning segment; sequence ISIYNEEMIVALCFIGFIIFS.

Belongs to the ATPase protein MI25 family. In terms of assembly, F-type ATPases have 2 components, CF(1) - the catalytic core - and CF(0) - the membrane proton channel. CF(1) has five subunits: alpha(3), beta(3), gamma(1), delta(1), epsilon(1). CF(0) has three main subunits: a, b and c.

It is found in the mitochondrion membrane. This is one of the chains of the nonenzymatic component (CF(0) subunit) of the mitochondrial ATPase complex. The chain is ATP synthase protein MI25 from Nicotiana tabacum (Common tobacco).